A 164-amino-acid chain; its full sequence is ATP synthase subunit b (164 aa).

A helical transmembrane segment spans residues 10–30 (LLISQIVNFCLLAFLLNTFLY).

It belongs to the ATPase B chain family. As to quaternary structure, F-type ATPases have 2 components, F(1) - the catalytic core - and F(0) - the membrane proton channel. F(1) has five subunits: alpha(3), beta(3), gamma(1), delta(1), epsilon(1). F(0) has three main subunits: a(1), b(2) and c(10-14). The alpha and beta chains form an alternating ring which encloses part of the gamma chain. F(1) is attached to F(0) by a central stalk formed by the gamma and epsilon chains, while a peripheral stalk is formed by the delta and b chains.

The protein resides in the cell membrane. Functionally, f(1)F(0) ATP synthase produces ATP from ADP in the presence of a proton or sodium gradient. F-type ATPases consist of two structural domains, F(1) containing the extramembraneous catalytic core and F(0) containing the membrane proton channel, linked together by a central stalk and a peripheral stalk. During catalysis, ATP synthesis in the catalytic domain of F(1) is coupled via a rotary mechanism of the central stalk subunits to proton translocation. Component of the F(0) channel, it forms part of the peripheral stalk, linking F(1) to F(0). This chain is ATP synthase subunit b, found in Herpetosiphon aurantiacus (strain ATCC 23779 / DSM 785 / 114-95).